Consider the following 341-residue polypeptide: MSSTAIVSGDESLEPTLQNLLDQKTLRWVFVGGKGGVGKTTTSCSLAIQLAKVRKSVLLISTDPAHNLSDAFGQKFGKEARLIDGFDNLSAMEIDPNGSIQDLLAAGGDQADDPMGGLGLGGMMQDLAFSIPGVDEAMSFAEVLKQVKSLSYEVIIFDTAPTGHTLRFLQFPTVLEKALGKLSQLSSQFGPMLNSVLGARGGLPGGQNLDEILSKMESLRETIGEVNAQFKDADLTTFVCVCIAEFLSLYETERMIQELTSYQIDTHCIVVNQLLFPGKDSSCEQCKARRKMQKKYLNEIEELYEDFNVVRMPMLVEEVRGKEKLEKFSNMLINPYIPPQE.

Residue 34–41 coordinates ATP; it reads KGGVGKTT. Residue Asp-63 is part of the active site. Glu-245 and Asn-272 together coordinate ATP. 2 residues coordinate Zn(2+): Cys-283 and Cys-286.

It belongs to the arsA ATPase family. In terms of assembly, homodimer.

It is found in the cytoplasm. Its subcellular location is the endoplasmic reticulum. In terms of biological role, ATPase required for the post-translational delivery of tail-anchored (TA) proteins to the endoplasmic reticulum. Recognizes and selectively binds the transmembrane domain of TA proteins in the cytosol. This complex then targets to the endoplasmic reticulum by membrane-bound receptors, where the tail-anchored protein is released for insertion. This process is regulated by ATP binding and hydrolysis. ATP binding drives the homodimer towards the closed dimer state, facilitating recognition of newly synthesized TA membrane proteins. ATP hydrolysis is required for insertion. Subsequently, the homodimer reverts towards the open dimer state, lowering its affinity for the membrane-bound receptor, and returning it to the cytosol to initiate a new round of targeting. The chain is ATPase GET3 from Ajellomyces dermatitidis (strain ER-3 / ATCC MYA-2586) (Blastomyces dermatitidis).